We begin with the raw amino-acid sequence, 425 residues long: Riboflavin biosynthesis protein RibBA (425 aa).

The DHBP synthase stretch occupies residues 1 to 204 (MTRLDSVERA…IADLIEWRRK (204 aa)). D-ribulose 5-phosphate is bound by residues 28-29 (RE), Asp-33, 141-145 (RPGHT), and Glu-165. Glu-29 is a Mg(2+) binding site. His-144 is a Mg(2+) binding site. Positions 205–425 (HEKHIERVAE…HLPGEFGGAL (221 aa)) are GTP cyclohydrolase II. 259–263 (RVHSE) is a binding site for GTP. Residues Cys-264, Cys-275, and Cys-277 each coordinate Zn(2+). Residues Gln-280, 303-305 (EGR), and Thr-325 contribute to the GTP site. The active-site Proton acceptor; for GTP cyclohydrolase activity is the Asp-337. Catalysis depends on Arg-339, which acts as the Nucleophile; for GTP cyclohydrolase activity. 2 residues coordinate GTP: Thr-360 and Lys-365.

This sequence in the N-terminal section; belongs to the DHBP synthase family. The protein in the C-terminal section; belongs to the GTP cyclohydrolase II family. Requires Mg(2+) as cofactor. The cofactor is Mn(2+). It depends on Zn(2+) as a cofactor.

The catalysed reaction is D-ribulose 5-phosphate = (2S)-2-hydroxy-3-oxobutyl phosphate + formate + H(+). The enzyme catalyses GTP + 4 H2O = 2,5-diamino-6-hydroxy-4-(5-phosphoribosylamino)-pyrimidine + formate + 2 phosphate + 3 H(+). The protein operates within cofactor biosynthesis; riboflavin biosynthesis; 2-hydroxy-3-oxobutyl phosphate from D-ribulose 5-phosphate: step 1/1. It participates in cofactor biosynthesis; riboflavin biosynthesis; 5-amino-6-(D-ribitylamino)uracil from GTP: step 1/4. In terms of biological role, catalyzes the conversion of D-ribulose 5-phosphate to formate and 3,4-dihydroxy-2-butanone 4-phosphate. Catalyzes the conversion of GTP to 2,5-diamino-6-ribosylamino-4(3H)-pyrimidinone 5'-phosphate (DARP), formate and pyrophosphate. The protein is Riboflavin biosynthesis protein RibBA of Mycobacterium bovis (strain ATCC BAA-935 / AF2122/97).